Consider the following 670-residue polypeptide: tRNA 5-methylaminomethyl-2-thiouridine biosynthesis bifunctional protein MnmC (670 aa).

Residues 1–242 (MTFSVQHAEI…KRECLSGLKI (242 aa)) form a tRNA (mnm(5)s(2)U34)-methyltransferase region. The segment at 269–670 (IGGGIASLCA…KKWLKGSKVE (402 aa)) is FAD-dependent cmnm(5)s(2)U34 oxidoreductase.

It in the N-terminal section; belongs to the methyltransferase superfamily. tRNA (mnm(5)s(2)U34)-methyltransferase family. The protein in the C-terminal section; belongs to the DAO family. It depends on FAD as a cofactor.

The protein resides in the cytoplasm. The enzyme catalyses 5-aminomethyl-2-thiouridine(34) in tRNA + S-adenosyl-L-methionine = 5-methylaminomethyl-2-thiouridine(34) in tRNA + S-adenosyl-L-homocysteine + H(+). Catalyzes the last two steps in the biosynthesis of 5-methylaminomethyl-2-thiouridine (mnm(5)s(2)U) at the wobble position (U34) in tRNA. Catalyzes the FAD-dependent demodification of cmnm(5)s(2)U34 to nm(5)s(2)U34, followed by the transfer of a methyl group from S-adenosyl-L-methionine to nm(5)s(2)U34, to form mnm(5)s(2)U34. This chain is tRNA 5-methylaminomethyl-2-thiouridine biosynthesis bifunctional protein MnmC, found in Haemophilus influenzae (strain PittEE).